A 255-amino-acid polypeptide reads, in one-letter code: Hydroxyacylglutathione hydrolase (255 aa).

Zn(2+) is bound by residues H55, H57, D59, H60, H113, D132, and H170.

The protein belongs to the metallo-beta-lactamase superfamily. Glyoxalase II family. In terms of assembly, monomer. Zn(2+) is required as a cofactor.

It carries out the reaction an S-(2-hydroxyacyl)glutathione + H2O = a 2-hydroxy carboxylate + glutathione + H(+). The protein operates within secondary metabolite metabolism; methylglyoxal degradation; (R)-lactate from methylglyoxal: step 2/2. Thiolesterase that catalyzes the hydrolysis of S-D-lactoyl-glutathione to form glutathione and D-lactic acid. The chain is Hydroxyacylglutathione hydrolase from Methylobacterium sp. (strain 4-46).